A 1167-amino-acid chain; its full sequence is DNA-directed RNA polymerase subunit beta (1167 aa).

It belongs to the RNA polymerase beta chain family. As to quaternary structure, the RNAP catalytic core consists of 2 alpha, 1 beta, 1 beta' and 1 omega subunit. When a sigma factor is associated with the core the holoenzyme is formed, which can initiate transcription.

It catalyses the reaction RNA(n) + a ribonucleoside 5'-triphosphate = RNA(n+1) + diphosphate. Its function is as follows. DNA-dependent RNA polymerase catalyzes the transcription of DNA into RNA using the four ribonucleoside triphosphates as substrates. This chain is DNA-directed RNA polymerase subunit beta, found in Treponema denticola (strain ATCC 35405 / DSM 14222 / CIP 103919 / JCM 8153 / KCTC 15104).